The chain runs to 206 residues: Large ribosomal subunit protein uL4 (206 aa).

This sequence belongs to the universal ribosomal protein uL4 family. Part of the 50S ribosomal subunit.

Functionally, one of the primary rRNA binding proteins, this protein initially binds near the 5'-end of the 23S rRNA. It is important during the early stages of 50S assembly. It makes multiple contacts with different domains of the 23S rRNA in the assembled 50S subunit and ribosome. Its function is as follows. Forms part of the polypeptide exit tunnel. The protein is Large ribosomal subunit protein uL4 of Paracoccus denitrificans (strain Pd 1222).